Consider the following 1090-residue polypeptide: Solute carrier family 38 member 10 (1090 aa).

Helical transmembrane passes span 9 to 31, 36 to 58, 84 to 104, 123 to 143, 153 to 173, 229 to 249, 272 to 292, 323 to 343, 345 to 365, and 378 to 398; these read WGLITNVVNSIVGVSVLTMPFCF, IVLGALLLVFCSWMTHQSCMFLV, LVETSMIGLMLGSCITFYVVI, TVRVFLLFAVSLFIVLPLSLQ, FSAMALLFYTVFMFVIVLSSL, IFASSLNVVTAFYVMVGFFGY, MIRVGFVMSVAVGFPMMILPC, VLTLSVVFGTMVGGVMIPNVE, ILGFTGATMGSLICFICPALI, and VVLWVGLGILVVSTLTTLSVT. Residue Ser441 is modified to Phosphoserine. Composition is skewed to basic and acidic residues over residues 441 to 454, 493 to 508, 517 to 528, 544 to 560, 587 to 596, and 607 to 623; these read SQEKLKPAEDKEVL, EAHRHEPPIPHDKVVV, PEEKKPPPRLPD, ESEKEKQEPERGGEGKR, PRKEDSRPGN, and DSVELKALAADDGREPA. Disordered regions lie at residues 441 to 675, 729 to 831, and 857 to 1037; these read SQEK…AGSK, EIRQ…IDLR, and KAAP…ELAP. 2 positions are modified to phosphoserine: Ser608 and Ser636. Basic and acidic residues-rich tracts occupy residues 654-665, 729-744, and 758-767; these read EAAEQREKKEAE, EIRQQRQEGEEDKPKP, and GQEEEAEHAG. Thr769 is modified (phosphothreonine). Ser887 bears the Phosphoserine mark. Residues 923-936 show a composition bias toward polar residues; the sequence is RQSGPTKAPVQTQA. 3 stretches are compositionally biased toward basic and acidic residues: residues 954-973, 1004-1013, and 1026-1037; these read PEVRSEAPRAVHIPPEEQHK, ENAKPNRDLK, and DLASHPEQELAP.

Belongs to the amino acid/polyamine transporter 2 family. As to expression, expressed in neurons, astrocytes and epithelial cells scattered throughout the central nervous system structures including striatum, ependyma, cerebral cortex, hippocampus, hypothalamus, thalamus, pons, and cerebellum (at protein level). Highly expressed in paraventricular hypothalamic nucleus, suprachiasmatic nucleus, anterior hypothalamic area central part, in lateral ventricule and in dorsal 3rd ventricule (at protein level). Expressed in choroid plexus epithelial cells (at protein level).

The protein localises to the membrane. It carries out the reaction L-glutamate(out) = L-glutamate(in). It catalyses the reaction L-glutamine(out) = L-glutamine(in). The catalysed reaction is L-alanine(in) = L-alanine(out). The enzyme catalyses L-serine(in) = L-serine(out). It carries out the reaction L-leucine(in) = L-leucine(out). Functionally, facilitates bidirectional transport of amino acids. May act as a glutamate sensor that regulates glutamate-glutamine cycle and mTOR signaling in the brain. The transport mechanism remains to be elucidated. This is Solute carrier family 38 member 10 from Mus musculus (Mouse).